We begin with the raw amino-acid sequence, 360 residues long: MSKQILILPGDGIGPEIMAEAVKVLELANDKFQLGFSLAHDVIGGAAIDKHGVPLADETLERARKADAVLLGAVGGPKWDKIERDIRPERGLLKIRSQLGLFANLRPAILYPQLADASSLKPEIVSGLDILIVRELTGGIYFGAPRGQRELEGGERQAYDTLPYSESEVRRIARVGFDMARVRGKKLCSVDKANVLASSQLWREVVEDVAKDYPDVELSHMYVDNAAMQLVRAPKQFDVMVTDNMFGDILSDEASMLTGSIGMLPSASLDADNKGMYEPCHGSAPDIAGLGIANPLATILSVSMMLRYSFNQSAAAEAIEKAVSLVLDQGLRTGDIFSEGCRKVGTQEMGDAVVAALRNL.

Position 76 to 89 (76 to 89 (GPKWDKIERDIRPE)) interacts with NAD(+). 4 residues coordinate substrate: arginine 96, arginine 106, arginine 134, and aspartate 224. Residues aspartate 224, aspartate 248, and aspartate 252 each coordinate Mg(2+). 282–294 (GSAPDIAGLGIAN) is a binding site for NAD(+).

The protein belongs to the isocitrate and isopropylmalate dehydrogenases family. LeuB type 1 subfamily. In terms of assembly, homodimer. It depends on Mg(2+) as a cofactor. Requires Mn(2+) as cofactor.

The protein resides in the cytoplasm. The catalysed reaction is (2R,3S)-3-isopropylmalate + NAD(+) = 4-methyl-2-oxopentanoate + CO2 + NADH. It functions in the pathway amino-acid biosynthesis; L-leucine biosynthesis; L-leucine from 3-methyl-2-oxobutanoate: step 3/4. In terms of biological role, catalyzes the oxidation of 3-carboxy-2-hydroxy-4-methylpentanoate (3-isopropylmalate) to 3-carboxy-4-methyl-2-oxopentanoate. The product decarboxylates to 4-methyl-2 oxopentanoate. This chain is 3-isopropylmalate dehydrogenase, found in Pseudomonas putida (strain ATCC 47054 / DSM 6125 / CFBP 8728 / NCIMB 11950 / KT2440).